The following is a 160-amino-acid chain: Large ribosomal subunit protein uL11 (160 aa).

Belongs to the universal ribosomal protein uL11 family. As to quaternary structure, part of the ribosomal stalk of the 50S ribosomal subunit. Interacts with L10 and the large rRNA to form the base of the stalk. L10 forms an elongated spine to which L12 dimers bind in a sequential fashion forming a multimeric L10(L12)X complex.

Forms part of the ribosomal stalk which helps the ribosome interact with GTP-bound translation factors. This Methanococcus aeolicus (strain ATCC BAA-1280 / DSM 17508 / OCM 812 / Nankai-3) protein is Large ribosomal subunit protein uL11.